The primary structure comprises 487 residues: MKPSTEWWRYLAPLAVIAIIALIPVPAGLESHTWLYFAVFTGVIVGLILEPVPGAVVAMVGISIIAILSPWLLFSPEQLAQPGFKFTAKSLSWAVSGFSNSVIWLIFAAFMFGTGYEKTGLGRRIALILVKKMGHRTLFLGYAVMFSELILAPVTPSNSARGAGIIYPIIRNLPPLYQSQPNDSSSRSIGSYIMWMGIVADCVTSAIFLTAMAPNLLLIGLMKSASHATLSWGDWFLGMLPLSILLVLLVPWLAYVLYPPVLKSGDQVPRWAETELQAMGPLCSREKRMLGLIVGALVLWIFGGDYIDAAMVGYSVVALMLLLRIISWDDIVSNKAAWNVFFWLASLITLATGLNNTGFISWFGKLLAGSLSGYSPTMVMVALIVVFYLLRYFFASATAYTSALAPMMIAAALAMPEIPLPVFCLMVGAAIGLGSILTPYATGPSPIYYGSGYLPTADYWRLGAIFGLIFLVLLVITGLLWMPVVLL.

A run of 14 helical transmembrane segments spans residues 10–30, 33–53, 54–74, 93–113, 137–157, 189–209, 236–256, 292–312, 313–333, 340–360, 370–390, 393–413, 418–438, and 465–485; these read YLAP…AGLE, TWLY…EPVP, GAVV…WLLF, WAVS…FMFG, TLFL…VTPS, IGSY…AIFL, FLGM…LAYV, LIVG…AAMV, GYSV…DIVS, VFFW…TGFI, SLSG…FYLL, FFAS…AAAL, IPLP…SILT, and IFGL…MPVV.

The protein belongs to the SLC13A/DASS transporter (TC 2.A.47) family. DIT1 subfamily.

The protein localises to the cell inner membrane. The enzyme catalyses (2R,3R)-tartrate(out) + succinate(in) = (2R,3R)-tartrate(in) + succinate(out). Catalyzes the uptake of tartrate in exchange for intracellular succinate. Essential for anaerobic L-tartrate fermentation. This is L-tartrate/succinate antiporter (ttdT) from Shigella sonnei (strain Ss046).